The following is a 353-amino-acid chain: Quinolinate synthase (353 aa).

Iminosuccinate contacts are provided by H49 and S70. C115 contacts [4Fe-4S] cluster. Iminosuccinate contacts are provided by residues 141-143 and S158; that span reads YAN. Residue C202 coordinates [4Fe-4S] cluster. Residues 228–230 and T245 each bind iminosuccinate; that span reads HPE. C299 provides a ligand contact to [4Fe-4S] cluster.

The protein belongs to the quinolinate synthase family. Type 1 subfamily. [4Fe-4S] cluster is required as a cofactor.

The protein localises to the cytoplasm. It catalyses the reaction iminosuccinate + dihydroxyacetone phosphate = quinolinate + phosphate + 2 H2O + H(+). The protein operates within cofactor biosynthesis; NAD(+) biosynthesis; quinolinate from iminoaspartate: step 1/1. Its function is as follows. Catalyzes the condensation of iminoaspartate with dihydroxyacetone phosphate to form quinolinate. The protein is Quinolinate synthase of Hahella chejuensis (strain KCTC 2396).